The following is a 1155-amino-acid chain: ATP-dependent helicase/deoxyribonuclease subunit B (1155 aa).

The 300-residue stretch at 1-300 (MSLRFIVGRA…AHLEKYYFRH (300 aa)) folds into the UvrD-like helicase ATP-binding domain. Residue 8–15 (GRAGSGKS) coordinates ATP. Residues 280–590 (TPVRFQKDSA…VVGTLERSRN (311 aa)) form the UvrD-like helicase C-terminal domain. [4Fe-4S] cluster contacts are provided by cysteine 792, cysteine 1111, cysteine 1114, and cysteine 1120.

It belongs to the helicase family. AddB/RexB type 1 subfamily. Heterodimer of AddA and AddB. The cofactor is Mg(2+). [4Fe-4S] cluster serves as cofactor.

The heterodimer acts as both an ATP-dependent DNA helicase and an ATP-dependent, dual-direction single-stranded exonuclease. Recognizes the chi site generating a DNA molecule suitable for the initiation of homologous recombination. The AddB subunit has 5' -&gt; 3' nuclease activity but not helicase activity. This is ATP-dependent helicase/deoxyribonuclease subunit B from Desulforamulus reducens (strain ATCC BAA-1160 / DSM 100696 / MI-1) (Desulfotomaculum reducens).